A 647-amino-acid chain; its full sequence is Sialidase (647 aa).

A signal peptide spans 1-37 (MTANPYLRRLPRRRAVSFLLAPALAAATVAGASPAQA). Arginine 68 contributes to the substrate binding site. Aspartate 92 acts as the Proton acceptor in catalysis. 3 BNR repeats span residues 102-113 (RRSTDGGRTWGE), 175-186 (ATSTDGGLTWSH), and 239-250 (VYSDDHGRTWRA). The Nucleophile role is filled by glutamate 260. Position 276 (arginine 276) interacts with substrate. BNR repeat units lie at residues 287-298 (AVSTDGGHSYGP) and 348-359 (RMSCDDGQTWPV). The active-site Nucleophile is tyrosine 370. Positions 496-646 (TFTVTVGLLD…AVAELEVEGQ (151 aa)) constitute an F5/8 type C domain.

The protein belongs to the glycosyl hydrolase 33 family.

Its subcellular location is the secreted. It carries out the reaction Hydrolysis of alpha-(2-&gt;3)-, alpha-(2-&gt;6)-, alpha-(2-&gt;8)- glycosidic linkages of terminal sialic acid residues in oligosaccharides, glycoproteins, glycolipids, colominic acid and synthetic substrates.. To release sialic acids for use as carbon and energy sources for this non-pathogenic bacterium while in pathogenic microorganisms, sialidases have been suggested to be pathogenic factors. This is Sialidase (nedA) from Micromonospora viridifaciens.